A 192-amino-acid polypeptide reads, in one-letter code: Orotate phosphoribosyltransferase (192 aa).

Position 116–124 (116–124 (EDIVTTGLS)) interacts with 5-phospho-alpha-D-ribose 1-diphosphate. Residues threonine 120 and arginine 148 each contribute to the orotate site.

This sequence belongs to the purine/pyrimidine phosphoribosyltransferase family. PyrE subfamily. As to quaternary structure, homodimer. Requires Mg(2+) as cofactor.

It catalyses the reaction orotidine 5'-phosphate + diphosphate = orotate + 5-phospho-alpha-D-ribose 1-diphosphate. Its pathway is pyrimidine metabolism; UMP biosynthesis via de novo pathway; UMP from orotate: step 1/2. Functionally, catalyzes the transfer of a ribosyl phosphate group from 5-phosphoribose 1-diphosphate to orotate, leading to the formation of orotidine monophosphate (OMP). The protein is Orotate phosphoribosyltransferase of Bartonella tribocorum (strain CIP 105476 / IBS 506).